A 340-amino-acid chain; its full sequence is Photosystem II assembly lipoprotein Ycf48 (340 aa).

Positions methionine 1–glycine 26 are cleaved as a signal peptide. Cysteine 27 carries N-palmitoyl cysteine lipidation. A lipid anchor (S-diacylglycerol cysteine) is attached at cysteine 27.

Belongs to the Ycf48 family. Part of early PSII assembly complexes which includes D1 (psbA) and PsbI; not found in mature PSII. Binds to the lumenal side of PSII complexes. Interacts with YidC.

It is found in the cellular thylakoid membrane. Functionally, a factor required for optimal assembly of photosystem II (PSII), acting in the early stages of PSII assembly. Also plays a role in replacement of photodamaged D1 (psbA). Assists YidC in synthesis of chlorophyll-binding proteins. In Picosynechococcus sp. (strain ATCC 27264 / PCC 7002 / PR-6) (Agmenellum quadruplicatum), this protein is Photosystem II assembly lipoprotein Ycf48.